Consider the following 482-residue polypeptide: MKFIIKLFPEITIKSQSVRLRFIKILTGNIRNVLKHYDETLAVVRHWDNIEVRAKDENQRLAIRDALTRIPGIHHILEVEDVPFTDMHDIFEKALAQYREQLEGKTFCVRVKRRGKHEFSSIEVERYVGGGLNQHIESARVKLTNPDVTVHLEVEDDRLLLIKGRYEGIGGFPIGTQEDVLSLISGGFDSGVSSYMLMRRGCRVHYCFFNLGGAAHEIGVRQVAHYLWNRFGSSHRVRFVAINFEPVVGEILEKVDDGQMGVVLKRMMVRAASKVAERYGVQALVTGEALGQVSSQTLTNLRLIDNVSDTLILRPLISYDKEHIINLARQIGTEDFARTMPEYCGVISKSPTVKAIKAKIEAEEENFDFSILDKVVEEANNVDMREIAQQTQQEVVEVETVSGFGANDVILDIRSVDEQDDKPLKVEGVDVVSLPFYKLSTKFGDLDQSKTWLLWCERGVMSRLQALYLREQGFANVKVYRP.

The 105-residue stretch at 61 to 165 (LAIRDALTRI…DDRLLLIKGR (105 aa)) folds into the THUMP domain. ATP contacts are provided by residues 183–184 (LI), K265, G287, and Q296. C344 and C456 form a disulfide bridge. A Rhodanese domain is found at 404-482 (FGANDVILDI…GFANVKVYRP (79 aa)). Residue C456 is the Cysteine persulfide intermediate of the active site.

Belongs to the ThiI family.

The protein resides in the cytoplasm. It carries out the reaction [ThiI sulfur-carrier protein]-S-sulfanyl-L-cysteine + a uridine in tRNA + 2 reduced [2Fe-2S]-[ferredoxin] + ATP + H(+) = [ThiI sulfur-carrier protein]-L-cysteine + a 4-thiouridine in tRNA + 2 oxidized [2Fe-2S]-[ferredoxin] + AMP + diphosphate. It catalyses the reaction [ThiS sulfur-carrier protein]-C-terminal Gly-Gly-AMP + S-sulfanyl-L-cysteinyl-[cysteine desulfurase] + AH2 = [ThiS sulfur-carrier protein]-C-terminal-Gly-aminoethanethioate + L-cysteinyl-[cysteine desulfurase] + A + AMP + 2 H(+). It participates in cofactor biosynthesis; thiamine diphosphate biosynthesis. Its function is as follows. Catalyzes the ATP-dependent transfer of a sulfur to tRNA to produce 4-thiouridine in position 8 of tRNAs, which functions as a near-UV photosensor. Also catalyzes the transfer of sulfur to the sulfur carrier protein ThiS, forming ThiS-thiocarboxylate. This is a step in the synthesis of thiazole, in the thiamine biosynthesis pathway. The sulfur is donated as persulfide by IscS. This chain is tRNA sulfurtransferase, found in Salmonella paratyphi B (strain ATCC BAA-1250 / SPB7).